The sequence spans 442 residues: 5'-deoxyadenosine deaminase (442 aa).

Zn(2+) contacts are provided by His-72 and His-74. 2 residues coordinate substrate: Glu-101 and His-193. His-220 lines the Zn(2+) pocket. Positions 223 and 309 each coordinate substrate. Zn(2+) is bound at residue Asp-309.

It belongs to the metallo-dependent hydrolases superfamily. MTA/SAH deaminase family. Homotetramer. It depends on Zn(2+) as a cofactor.

It catalyses the reaction 5'-deoxyadenosine + H2O + H(+) = 5'-deoxyinosine + NH4(+). The enzyme catalyses S-adenosyl-L-homocysteine + H2O + H(+) = S-inosyl-L-homocysteine + NH4(+). The catalysed reaction is S-methyl-5'-thioadenosine + H2O + H(+) = S-methyl-5'-thioinosine + NH4(+). It carries out the reaction adenosine + H2O + H(+) = inosine + NH4(+). Its pathway is amino-acid biosynthesis; S-adenosyl-L-methionine biosynthesis. In terms of biological role, catalyzes the deamination of three SAM-derived enzymatic products, namely 5'-deoxyadenosine, S-adenosyl-L-homocysteine, and 5'-methylthioadenosine, to produce the inosine analogs. Can also deaminate adenosine. The preferred substrate for this enzyme is 5'-deoxyadenosine, but all these substrates are efficiently deaminated. Likely functions in a S-adenosyl-L-methionine (SAM) recycling pathway from S-adenosyl-L-homocysteine (SAH) produced from SAM-dependent methylation reactions. May also be involved in the recycling of 5'-deoxyadenosine, whereupon the 5'-deoxyribose moiety of 5'-deoxyinosine is further metabolized to deoxyhexoses used for the biosynthesis of aromatic amino acids in methanogens. This is 5'-deoxyadenosine deaminase from Methanoregula boonei (strain DSM 21154 / JCM 14090 / 6A8).